The primary structure comprises 229 residues: MEKKKAFTPLLYLASIIFLPWWISLSFQKSMESWVTNWWNTRQSEPFLNDIEEKSILEKFIELEELLFLEEMIKEYSETHLQNLRIGIHKETIQLIKIHNEGRIHTILHFSTNIICFIILSGYSLLGNKELVILNSWVQEFLYNLSDTIKAFSLLLLTDLCIGFHSPHGWELMIGFVYKDFGFVHNEQIISGLVSTFPVILDTIFKYWIFRYLNRVSPSLVVIYHSMND.

Helical transmembrane passes span 7–27 (FTPLLYLASIIFLPWWISLSF), 107–127 (ILHFSTNIICFIILSGYSLLG), and 189–209 (IISGLVSTFPVILDTIFKYWI).

Belongs to the CemA family.

Its subcellular location is the plastid. The protein localises to the chloroplast inner membrane. It catalyses the reaction K(+)(in) + H(+)(out) = K(+)(out) + H(+)(in). Contributes to K(+)/H(+) antiport activity by supporting proton efflux to control proton extrusion and homeostasis in chloroplasts in a light-dependent manner to modulate photosynthesis. Prevents excessive induction of non-photochemical quenching (NPQ) under continuous-light conditions. Indirectly promotes efficient inorganic carbon uptake into chloroplasts. The protein is Potassium/proton antiporter CemA of Lactuca sativa (Garden lettuce).